The sequence spans 159 residues: SsrA-binding protein (159 aa).

The segment covering 138-153 (KREDGKDKDWSREKER) has biased composition (basic and acidic residues). Residues 138–159 (KREDGKDKDWSREKERLMKHKA) form a disordered region.

The protein belongs to the SmpB family.

It localises to the cytoplasm. Required for rescue of stalled ribosomes mediated by trans-translation. Binds to transfer-messenger RNA (tmRNA), required for stable association of tmRNA with ribosomes. tmRNA and SmpB together mimic tRNA shape, replacing the anticodon stem-loop with SmpB. tmRNA is encoded by the ssrA gene; the 2 termini fold to resemble tRNA(Ala) and it encodes a 'tag peptide', a short internal open reading frame. During trans-translation Ala-aminoacylated tmRNA acts like a tRNA, entering the A-site of stalled ribosomes, displacing the stalled mRNA. The ribosome then switches to translate the ORF on the tmRNA; the nascent peptide is terminated with the 'tag peptide' encoded by the tmRNA and targeted for degradation. The ribosome is freed to recommence translation, which seems to be the essential function of trans-translation. This is SsrA-binding protein from Pseudoalteromonas translucida (strain TAC 125).